A 493-amino-acid chain; its full sequence is Dipeptide permease D (493 aa).

A run of 13 helical transmembrane segments spans residues 14 to 34, 49 to 69, 91 to 111, 138 to 158, 167 to 187, 212 to 232, 235 to 255, 267 to 287, 312 to 332, 344 to 364, 379 to 399, 413 to 433, and 458 to 478; these read VVAL…LLIL, ALFS…GYLA, LVLG…AIIV, GGFS…PIAC, WAMG…IFLC, NWGW…VLFW, WAVY…GKIY, LGLI…AQQG, MFQS…AWLI, IWGK…ILTL, LMIA…PVAM, VLTG…AGVI, and VFSE…LIWL.

It belongs to the major facilitator superfamily. Proton-dependent oligopeptide transporter (POT/PTR) (TC 2.A.17) family. DtpD subfamily.

The protein resides in the cell inner membrane. In terms of biological role, probable proton-dependent permease that transports dipeptides. The chain is Dipeptide permease D from Citrobacter rodentium (strain ICC168) (Citrobacter freundii biotype 4280).